We begin with the raw amino-acid sequence, 955 residues long: Leucine--tRNA ligase (955 aa).

The 'HIGH' region signature appears at 51–61; that stretch reads PYLNGVLHAGH. Positions 647 to 651 match the 'KMSKS' region motif; sequence KLSKS. Lys650 contacts ATP.

This sequence belongs to the class-I aminoacyl-tRNA synthetase family.

It is found in the cytoplasm. The catalysed reaction is tRNA(Leu) + L-leucine + ATP = L-leucyl-tRNA(Leu) + AMP + diphosphate. The polypeptide is Leucine--tRNA ligase (Methanococcus maripaludis (strain C5 / ATCC BAA-1333)).